Here is a 371-residue protein sequence, read N- to C-terminus: Cytochrome b (371 aa).

A run of 4 helical transmembrane segments spans residues 32–52, 76–98, 113–133, and 179–199; these read VGFS…CLAW, FVIR…VHIF, VWAV…IGYV, and LHVL…MHLF. The heme b site is built by histidine 82 and histidine 96. The heme b site is built by histidine 183 and histidine 197. Histidine 202 is an a ubiquinone binding site. 4 helical membrane-spanning segments follow: residues 227 to 247, 296 to 316, 329 to 349, and 350 to 370; these read FYLR…YFIF, LMVI…LWFV, LILF…ILAY, and PIWM…VCRL.

Belongs to the cytochrome b family. The main subunits of complex b-c1 are: cytochrome b, cytochrome c1 and the Rieske protein. Heme b serves as cofactor.

It localises to the mitochondrion inner membrane. In terms of biological role, component of the ubiquinol-cytochrome c reductase complex (complex III or cytochrome b-c1 complex) that is part of the mitochondrial respiratory chain. The b-c1 complex mediates electron transfer from ubiquinol to cytochrome c. Contributes to the generation of a proton gradient across the mitochondrial membrane that is then used for ATP synthesis. The sequence is that of Cytochrome b (MT-CYB) from Leishmania tarentolae (Sauroleishmania tarentolae).